A 477-amino-acid polypeptide reads, in one-letter code: Glycogen synthase (477 aa).

Position 15 (K15) interacts with ADP-alpha-D-glucose.

The protein belongs to the glycosyltransferase 1 family. Bacterial/plant glycogen synthase subfamily.

The enzyme catalyses [(1-&gt;4)-alpha-D-glucosyl](n) + ADP-alpha-D-glucose = [(1-&gt;4)-alpha-D-glucosyl](n+1) + ADP + H(+). The protein operates within glycan biosynthesis; glycogen biosynthesis. In terms of biological role, synthesizes alpha-1,4-glucan chains using ADP-glucose. The polypeptide is Glycogen synthase (Erwinia tasmaniensis (strain DSM 17950 / CFBP 7177 / CIP 109463 / NCPPB 4357 / Et1/99)).